The following is a 387-amino-acid chain: MKTIILALALIVLASSTQADVIATIKKIDQSPFGRTLFDTIWLELQTGDPLDRLLQTLTDLEDRYVAEQKEDDARNHEYQDACTVDIKAFDKDLAESNRKKIELEARLEGQLYPQRGILQGLVAQKQAEVKGYQKDLDELDAQRAEEKADFEEKVLEHQEATAIIAEARRLFADNIEHESFIQKGKATKQPAHKFTKEVASMIQKHFTTSAKKAAKFQHRKGYSKLFKAFATIASKVEQLADAGAVSKIIDLADELLAKIADSLSLLRFAEDKRVEAYKKSRNFIVISLTVAGTALANAQSDLAALNDVIAQVEASLDTTNQRIENVSADRNDRFTQCEEAVQDYQDARSARSSDRDVVSQTIGLVNKELRTLREQLALRQSAGEEI.

The first 19 residues, 1 to 19 (MKTIILALALIVLASSTQA), serve as a signal peptide directing secretion. Positions 20 to 48 (DVIATIKKIDQSPFGRTLFDTIWLELQTG) are excised as a propeptide. A coiled-coil region spans residues 51–163 (LDRLLQTLTD…KVLEHQEATA (113 aa)). A propeptide spanning residues 184–239 (KGKATKQPAHKFTKEVASMIQKHFTTSAKKAAKFQHRKGYSKLFKAFATIASKVEQ) is cleaved from the precursor. A coiled-coil region spans residues 294 to 333 (TALANAQSDLAALNDVIAQVEASLDTTNQRIENVSADRND).

The protein belongs to the TMP family. Two components are produced by post-translational processing from the precursor peptide.

It localises to the trichocyst. Structural protein that crystallize inside the trichocyst matrix. This is Trichocyst matrix protein T2-C (T2C) from Paramecium tetraurelia.